We begin with the raw amino-acid sequence, 445 residues long: MEKIWLEAQSNIKKVLTPQTYNTWIKPIHFHNVSDTNLTLEVPSKFIKEWVTEKYLSIIIEAISSLTNIKYQVDFKITEKSQVEKKKVDLQATEKIENDSTRNVDFNTNLNPKYTFDSFVCGASNQFAHAASQAVANNPACNYNPLFIYGGVGLGKTHLLIAIGNQIRENNKKAKICYYSSEKFMNEMINSLRYKKMDEFRNKFRKMDILLIDDIQFMAGKEATQEEFFHTFNALYESHKQIVVTSDKFPKDIPGLEERLRSRFEWGLIADIQPPDIETKIAILKKKSDLNSITLPNDVALFLASSATSNVRELEGMLIRLGAYASLTGSEISLNMARDILKDIIVEKTKDITVEMIQKHVADHFKIKVSELKSDKRLKTFVIPRQIAIYISRELTKASYPEIGERFGGKDHSTIIHSVKKIEKQMENDLEIKNTVEKMKKELMS.

Residues 1-69 (MEKIWLEAQS…IEAISSLTNI (69 aa)) are domain I, interacts with DnaA modulators. Positions 69–108 (IKYQVDFKITEKSQVEKKKVDLQATEKIENDSTRNVDFNT) are domain II. A domain III, AAA+ region region spans residues 109 to 325 (NLNPKYTFDS…GMLIRLGAYA (217 aa)). ATP is bound by residues Gly153, Gly155, Lys156, and Thr157. The tract at residues 326-445 (SLTGSEISLN…VEKMKKELMS (120 aa)) is domain IV, binds dsDNA.

Belongs to the DnaA family. As to quaternary structure, oligomerizes as a right-handed, spiral filament on DNA at oriC.

It localises to the cytoplasm. In terms of biological role, plays an essential role in the initiation and regulation of chromosomal replication. ATP-DnaA binds to the origin of replication (oriC) to initiate formation of the DNA replication initiation complex once per cell cycle. Binds the DnaA box (a 9 base pair repeat at the origin) and separates the double-stranded (ds)DNA. Forms a right-handed helical filament on oriC DNA; dsDNA binds to the exterior of the filament while single-stranded (ss)DNA is stabiized in the filament's interior. The ATP-DnaA-oriC complex binds and stabilizes one strand of the AT-rich DNA unwinding element (DUE), permitting loading of DNA polymerase. After initiation quickly degrades to an ADP-DnaA complex that is not apt for DNA replication. Binds acidic phospholipids. The polypeptide is Chromosomal replication initiator protein DnaA (Geotalea daltonii (strain DSM 22248 / JCM 15807 / FRC-32) (Geobacter daltonii)).